The following is a 457-amino-acid chain: Phosphoglucosamine mutase (457 aa).

Serine 105 functions as the Phosphoserine intermediate in the catalytic mechanism. Positions 105, 247, 249, and 251 each coordinate Mg(2+). The residue at position 105 (serine 105) is a Phosphoserine.

Belongs to the phosphohexose mutase family. Requires Mg(2+) as cofactor. Post-translationally, activated by phosphorylation.

It catalyses the reaction alpha-D-glucosamine 1-phosphate = D-glucosamine 6-phosphate. Functionally, catalyzes the conversion of glucosamine-6-phosphate to glucosamine-1-phosphate. The protein is Phosphoglucosamine mutase of Protochlamydia amoebophila (strain UWE25).